The primary structure comprises 1164 residues: Phospholipid-transporting ATPase IA (1164 aa).

Residues M1 to L65 lie on the Cytoplasmic side of the membrane. S25 bears the Phosphoserine mark. T28 bears the Phosphothreonine mark. Phosphoserine is present on S29. Residues P66–L86 form a helical membrane-spanning segment. Over L87–D92 the chain is Exoplasmic loop. A helical membrane pass occupies residues V93–K115. Residues E116–Q297 lie on the Cytoplasmic side of the membrane. A helical transmembrane segment spans residues I298–W319. The Exoplasmic loop segment spans residues N320–F344. Residues L345–V366 form a helical membrane-spanning segment. At K367–K857 the chain is on the cytoplasmic side. The active-site 4-aspartylphosphate intermediate is D409. ATP contacts are provided by D409, K410, and T411. D409 lines the Mg(2+) pocket. T411 provides a ligand contact to Mg(2+). S443 carries the phosphoserine modification. ATP is bound by residues E508, F549, K572, R605, T685, G686, D687, A741–T748, R775, and K781. D801 is a Mg(2+) binding site. ATP-binding residues include N804 and D805. D805 contributes to the Mg(2+) binding site. The helical transmembrane segment at C858–F878 threads the bilayer. Residues V879–R890 are Exoplasmic loop-facing. Residues W891–I910 traverse the membrane as a helical segment. Residues F911 to V940 are Cytoplasmic-facing. Residues F941–A962 traverse the membrane as a helical segment. At L963–D976 the chain is on the exoplasmic loop side. Residues Y977–E999 traverse the membrane as a helical segment. The Cytoplasmic portion of the chain corresponds to T1000 to W1005. The helical transmembrane segment at F1006–S1026 threads the bilayer. The Exoplasmic loop segment spans residues S1027–M1044. The chain crosses the membrane as a helical span at residues L1045–K1070. Residues V1071–W1164 are Cytoplasmic-facing. G1095–S1102 is an ATP binding site. At S1126 the chain carries Phosphoserine.

Belongs to the cation transport ATPase (P-type) (TC 3.A.3) family. Type IV subfamily. Component of a P4-ATPase flippase complex which consists of a catalytic alpha subunit and an accessory beta subunit. Interacts with TMEM30A to form a flippase complex; this complex forms an intermediate phosphoenzyme. Interacts with TMEM30B; this interaction is reported conflictingly. Requires Mg(2+) as cofactor. Cleaved by calpain in a caspase- and calcium influx-dependent manner during platelet apoptosis leading to a 100 kDa polypeptide. As to expression, found in most adult tissues except liver, testis and placenta. Most abundant in heart, brain and skeletal muscle. Also detected in fetal tissues. Isoform 1 is only detected in brain, skeletal muscle and heart and is the most abundant form in skeletal muscle. Highly expressed in platelets.

Its subcellular location is the cytoplasmic vesicle. It is found in the secretory vesicle. The protein resides in the chromaffin granule membrane. It localises to the cytoplasmic granule. The protein localises to the cell membrane. Its subcellular location is the endoplasmic reticulum. It is found in the golgi apparatus. The catalysed reaction is ATP + H2O + phospholipidSide 1 = ADP + phosphate + phospholipidSide 2.. It carries out the reaction a 1,2-diacyl-sn-glycero-3-phospho-L-serine(out) + ATP + H2O = a 1,2-diacyl-sn-glycero-3-phospho-L-serine(in) + ADP + phosphate + H(+). ATPase activity is stimulated by phosphatidylserine (PS) and minimally by phosphatidylethanolamine (PE). ATPase activity is inhibited by beryllium fluoride and aluminum trifluoride. In terms of biological role, catalytic component of a P4-ATPase flippase complex which catalyzes the hydrolysis of ATP coupled to the transport of aminophospholipids from the outer to the inner leaflet of various membranes and ensures the maintenance of asymmetric distribution of phospholipids. Phospholipid translocation also seems to be implicated in vesicle formation and in uptake of lipid signaling molecules. In vitro, its ATPase activity is selectively and stereospecifically stimulated by phosphatidylserine (PS). The flippase complex ATP8A1:TMEM30A seems to play a role in regulation of cell migration probably involving flippase-mediated translocation of phosphatidylethanolamine (PE) at the cell membrane. Acts as aminophospholipid translocase at the cell membrane in neuronal cells. The polypeptide is Phospholipid-transporting ATPase IA (Homo sapiens (Human)).